A 292-amino-acid polypeptide reads, in one-letter code: uncharacterized protein (292 aa).

Residues Leu-17, Asp-55, Asn-82, and Lys-115 each coordinate NADP(+). Ser-134 functions as the Proton donor in the catalytic mechanism. Positions 148, 152, and 184 each coordinate NADP(+). Residue Tyr-148 is the Proton acceptor of the active site. Lys-152 acts as the Lowers pKa of active site Tyr in catalysis.

This sequence belongs to the short-chain dehydrogenases/reductases (SDR) family.

It is found in the cytoplasm. This is an uncharacterized protein from Schizosaccharomyces pombe (strain 972 / ATCC 24843) (Fission yeast).